Consider the following 250-residue polypeptide: mRNA-decapping protein g5R (250 aa).

A Nudix hydrolase domain is found at 97–243 (QKFRKNWLLP…IIGPAFNFIK (147 aa)). The Nudix box signature appears at 132-153 (GKPKEDESDLTCAIREFEEETG). Glu138 contacts Mg(2+). Glu147 functions as the Nucleophile in the catalytic mechanism. Glu151 and Asp173 together coordinate Mg(2+).

The protein belongs to the Nudix hydrolase family. DIPP subfamily. As to quaternary structure, interacts with host RPL23A. Requires Mg(2+) as cofactor. The cofactor is Mn(2+).

Its subcellular location is the host rough endoplasmic reticulum. The enzyme catalyses diphospho-myo-inositol polyphosphate + H2O = myo-inositol polyphosphate + phosphate.. In terms of biological role, decapping enzyme required for the removal of the 5'-end m7GpppN cap tethered to viral and host mRNAs to allow their decay in cells. May therefore accelerate viral and cellular mRNA turnover to eliminate competing host mRNAs and allow stage-specific synthesis of viral proteins. Acceleration of the turnover of cellular transcripts may even promote the shutoff of host protein synthesis. In addition to the mRNA cap, g5R also efficiently hydrolyzes diphosphoinositol polyphosphates. Down-regulation of the level of PP-InsP5 (diphosphoinositol pentakisphosphate) may play a role in viral manipulation of the cellular secretory pathway, a step necessary for the formation of virions. Binds viral and cellular poly(A) mRNAs, thereby decreasing both types of mRNAs. This African swine fever virus (isolate Tick/South Africa/Pretoriuskop Pr4/1996) (ASFV) protein is mRNA-decapping protein g5R.